The chain runs to 513 residues: Cytochrome P450 94A2 (513 aa).

A helical membrane pass occupies residues 7–24 (ISWLLFSTSLFWFLFLAT). Cys455 is a heme binding site.

This sequence belongs to the cytochrome P450 family. Heme is required as a cofactor. Weakly expressed in seedlings.

It is found in the endoplasmic reticulum membrane. In terms of biological role, catalyzes the omega-hydroxylation of various fatty acids (FA). The substrate specificity is higher for myristate &gt; laurate = palmitate (C14&gt;C16=C12). The protein is Cytochrome P450 94A2 (CYP94A2) of Vicia sativa (Spring vetch).